Here is a 20-residue protein sequence, read N- to C-terminus: Agglutinin beta-2 chain (20 aa).

Positions 1–20 are disordered; the sequence is GRNGKSQSIIVGPWGDRVTN.

Belongs to the jacalin lectin family. As to quaternary structure, formed of four alpha chains and four beta chains.

Its function is as follows. D-galactose-specific lectin, binds the T-antigen structure Gal-beta1,3-GalNAc. The sequence is that of Agglutinin beta-2 chain from Maclura pomifera (Osage orange).